The chain runs to 125 residues: Holo-[acyl-carrier-protein] synthase (125 aa).

Positions 8 and 57 each coordinate Mg(2+).

It belongs to the P-Pant transferase superfamily. AcpS family. Mg(2+) serves as cofactor.

It localises to the cytoplasm. The catalysed reaction is apo-[ACP] + CoA = holo-[ACP] + adenosine 3',5'-bisphosphate + H(+). In terms of biological role, transfers the 4'-phosphopantetheine moiety from coenzyme A to a Ser of acyl-carrier-protein. The chain is Holo-[acyl-carrier-protein] synthase from Neisseria meningitidis serogroup C (strain 053442).